The sequence spans 363 residues: Cyclin-D1-1 (363 aa).

The disordered stretch occupies residues 39–77 (ELEREGEPAQGSSPSSSLSCAAAAAAAADDDDEDEDEHG). Residues 50-65 (SSPSSSLSCAAAAAAA) show a composition bias toward low complexity. Acidic residues predominate over residues 66–75 (ADDDDEDEDE).

It belongs to the cyclin family. Cyclin D subfamily.

In Oryza sativa subsp. japonica (Rice), this protein is Cyclin-D1-1 (CYCD1-1).